The chain runs to 312 residues: Ribosomal RNA small subunit methyltransferase H (312 aa).

S-adenosyl-L-methionine contacts are provided by residues Ala34–His36, Asp54, Phe81, Asp102, and Gln109.

This sequence belongs to the methyltransferase superfamily. RsmH family.

The protein localises to the cytoplasm. The catalysed reaction is cytidine(1402) in 16S rRNA + S-adenosyl-L-methionine = N(4)-methylcytidine(1402) in 16S rRNA + S-adenosyl-L-homocysteine + H(+). Specifically methylates the N4 position of cytidine in position 1402 (C1402) of 16S rRNA. This is Ribosomal RNA small subunit methyltransferase H from Geobacter sp. (strain M21).